The primary structure comprises 87 residues: Defensin-like protein 100 (87 aa).

The signal sequence occupies residues 1–29; that stretch reads MRSLRLRTVVVATIVVCLSVLLSPTEVDG. Disulfide bonds link Cys31–Cys79, Cys38–Cys64, Cys44–Cys76, and Cys48–Cys78.

This sequence belongs to the DEFL family.

It localises to the secreted. This chain is Defensin-like protein 100, found in Arabidopsis thaliana (Mouse-ear cress).